The sequence spans 123 residues: Large ribosomal subunit protein bL20 (123 aa).

It belongs to the bacterial ribosomal protein bL20 family.

Its function is as follows. Binds directly to 23S ribosomal RNA and is necessary for the in vitro assembly process of the 50S ribosomal subunit. It is not involved in the protein synthesizing functions of that subunit. In Pseudothermotoga lettingae (strain ATCC BAA-301 / DSM 14385 / NBRC 107922 / TMO) (Thermotoga lettingae), this protein is Large ribosomal subunit protein bL20.